Reading from the N-terminus, the 498-residue chain is Pyridine nucleotide-disulfide oxidoreductase domain-containing protein 1 (498 aa).

M1 carries the post-translational modification N-acetylmethionine.

This sequence belongs to the class-I pyridine nucleotide-disulfide oxidoreductase family. PYROXD1 subfamily. The cofactor is FAD.

Its subcellular location is the nucleus. It localises to the cytoplasm. It is found in the myofibril. The protein resides in the sarcomere. In terms of biological role, probable FAD-dependent oxidoreductase; involved in the cellular oxidative stress response. Required for normal sarcomere structure and muscle fiber integrity. The protein is Pyridine nucleotide-disulfide oxidoreductase domain-containing protein 1 (Pyroxd1) of Rattus norvegicus (Rat).